A 120-amino-acid polypeptide reads, in one-letter code: Eukaryotic translation initiation factor 4E-binding protein 2 (120 aa).

A phosphothreonine; by MTOR mark is found at Thr37 and Thr46. A YXXXXLphi motif motif is present at residues 54–60 (YDRKFLL). A Phosphoserine; by MTOR modification is found at Ser65. Thr70 is subject to Phosphothreonine; by MTOR. Ser83 bears the Phosphoserine mark. Deamidated asparagine is present on residues Asn99 and Asn102. Positions 116 to 120 (FEMDI) match the TOS motif motif.

Belongs to the eIF4E-binding protein family. Hypophosphorylated EIF4EBP2 interacts with EIF4E; phosphorylation of EIF4EBP2 by mTORC1 causes dissociation of the complex allowing EIF4G1/EIF4G3 to bind and consequent initiation of translation. Interacts (via TOS motif) with RPTOR; promoting phosphorylation by mTORC1. Interacts with PCMT1; required to prevent isoaspartate accumulation and convert isoaspartate to Asp. Post-translationally, phosphorylation at Thr-37, Thr-46, Ser-65, Thr-70 and Ser-83 is mediated by MTOR and corresponds to the hyperphosphorylated form: it abolishes binding to EIF4E by inducing folding of intrinsically disordered regions. First phosphorylated at Thr-37 and Thr-46 by MTOR, inducing folding of region encompassing residues from Pro-18 to Arg-62 of into a four-stranded beta-domain that sequesters the helical YXXXXLPhi motif into a partly buried beta-strand, blocking accessibility to EIF4E. Protein phosphorylated at Thr-37 and Thr-46 is however unstable and subsequent phosphorylation at Ser-65, Thr-70 and Ser-83 is required to stabilize the fold, decreasing affinity for EIF4E by a factor of 4000. Phosphorylated in response to insulin, EGF and PDGF. Deamidated at Asn-99 and Asn-102 to aspartate (Asp) in brain. Deamidation promotes interaction with RPTOR, subsequent phosphorylation by mTORC1 and increased translation, leading to impair kinetics of excitatory synaptic transmission. Deamidation takes place during postnatal development, when the PI3K-Akt-mTOR signaling is reduced, suggesting it acts as a compensatory mechanism to promote translation despite attenuated PI3K-Akt-mTOR signaling in neuron development. Deamidation converts Asn residues into a mixture of Asp and isoaspartate; interactions with PCMT1 is required to prevent isoaspartate accumulation and convert isoaspartate to Asp. Enriched in brain.

The protein resides in the cytoplasm. The protein localises to the nucleus. In terms of biological role, repressor of translation initiation involved in synaptic plasticity, learning and memory formation. Regulates EIF4E activity by preventing its assembly into the eIF4F complex: hypophosphorylated form of EIF4EBP2 competes with EIF4G1/EIF4G3 and strongly binds to EIF4E, leading to repress translation. In contrast, hyperphosphorylated form dissociates from EIF4E, allowing interaction between EIF4G1/EIF4G3 and EIF4E, leading to initiation of translation. EIF4EBP2 is enriched in brain and acts as a regulator of synapse activity and neuronal stem cell renewal via its ability to repress translation initiation. Mediates the regulation of protein translation by hormones, growth factors and other stimuli that signal through the MAP kinase and mTORC1 pathways. This Mus musculus (Mouse) protein is Eukaryotic translation initiation factor 4E-binding protein 2.